The sequence spans 530 residues: Serendipity locus protein alpha (530 aa).

Transient expression in blastoderm from nuclear cycle 11 to the onset of gastrulation.

Its subcellular location is the cytoplasm. It is found in the cell membrane. Its function is as follows. Required for the cellularization of the syncytial blastoderm embryo. Involved in the localization of the actin filaments just prior to and during plasma membrane invagination. Sry-alpha together with nullo and bnk may provide auxiliary functions, by acting both to stabilize a large and dynamic microfilament structure and regulate its functions. This chain is Serendipity locus protein alpha (Sry-alpha), found in Drosophila melanogaster (Fruit fly).